The following is a 508-amino-acid chain: NADH-quinone oxidoreductase subunit M (508 aa).

15 helical membrane passes run 1–21, 36–56, 63–83, 86–106, 113–133, 136–156, 177–197, 220–240, 255–275, 288–308, 317–337, 343–363, 389–409, 423–443, and 470–490; these read MLLPMLVSIPFFGGFLCLLFN, MALVFILSLILLFNTINVIVS, WSFEYIVPWIEKFGISFHLAV, LSILMLNLTSILGLVSVFCSW, IGLFYFGLLWTLGSIIGIFIS, LFLFFCFWELSVLPTYFLMIM, FFIYSQISGLVLLLSTLVLVY, IVLESCIMLGFFLAFAIKIPI, PVIGVVDISGILLKTSIYALM, IFSSIIMFFGIITIFYGAIVS, FIAYVSISHMGFILIAIYSIN, GAIIQLISYSLSTAALFLLSG, GFLLIFSIINLGVPGTGNFVG, MIVILSIFSLILLALCSLMFV, and LIFVFLLVLILIIGLYPNIII.

This sequence belongs to the complex I subunit 4 family. As to quaternary structure, composed of 13 different subunits. Subunits NuoA, H, J, K, L, M, N constitute the membrane sector of the complex.

Its subcellular location is the cell membrane. It catalyses the reaction a quinone + NADH + 5 H(+)(in) = a quinol + NAD(+) + 4 H(+)(out). Functionally, NDH-1 shuttles electrons from NADH, via FMN and iron-sulfur (Fe-S) centers, to quinones in the respiratory chain. Couples the redox reaction to proton translocation (for every two electrons transferred, four hydrogen ions are translocated across the cytoplasmic membrane), and thus conserves the redox energy in a proton gradient. This is NADH-quinone oxidoreductase subunit M (nuoM) from Buchnera aphidicola subsp. Baizongia pistaciae (strain Bp).